The sequence spans 450 residues: Glycerol dehydrogenase 1 (450 aa).

NAD(+) contacts are provided by residues Asp99, 155 to 159 (GKTMD), and 177 to 180 (TTAS). Asp182 provides a ligand contact to substrate. 3 residues coordinate NAD(+): Ser186, Leu188, and Tyr192. Residues Asp232, His315, and His333 each coordinate substrate. Asp232, His315, and His333 together coordinate Zn(2+).

This sequence belongs to the iron-containing alcohol dehydrogenase family. The cofactor is Zn(2+).

The protein resides in the mitochondrion. It carries out the reaction glycerol + NAD(+) = dihydroxyacetone + NADH + H(+). The protein operates within polyol metabolism; glycerol fermentation; glycerone phosphate from glycerol (oxidative route): step 1/2. In terms of biological role, glycerol dehydrogenase involved in the assimilation of glycerol. This is Glycerol dehydrogenase 1 (gld1) from Schizosaccharomyces pombe (strain 972 / ATCC 24843) (Fission yeast).